Consider the following 712-residue polypeptide: Patatin-like phospholipase domain-containing protein NFIA_019760 (712 aa).

Positions 1-13 (MTSDEKSATRDIY) are enriched in basic and acidic residues. The segment at 1 to 21 (MTSDEKSATRDIYDPNTLPDY) is disordered. The helical transmembrane segment at 85 to 105 (WPFLFTVFAWITVLGFAYTLT) threads the bilayer. In terms of domain architecture, PNPLA spans 275–466 (LCLSGGATFA…RTDIPIKALN (192 aa)). The short motif at 306-310 (GTSGG) is the GXSXG element. Residue S308 is the Nucleophile of the active site. D453 serves as the catalytic Proton acceptor. Residues 628-687 (RRRQDRAEEHADRMVERLDQSFPERQSDYKDESHYTEVSDSLSATSSRPHTPDARRSSMF) are disordered. 2 stretches are compositionally biased toward basic and acidic residues: residues 632–646 (DRAE…ERLD) and 652–664 (RQSD…HYTE). Residues 665–676 (VSDSLSATSSRP) are compositionally biased toward polar residues. Residues 677 to 687 (HTPDARRSSMF) show a composition bias toward basic and acidic residues.

Belongs to the PLPL family.

The protein localises to the membrane. Its function is as follows. Probable lipid hydrolase. This Neosartorya fischeri (strain ATCC 1020 / DSM 3700 / CBS 544.65 / FGSC A1164 / JCM 1740 / NRRL 181 / WB 181) (Aspergillus fischerianus) protein is Patatin-like phospholipase domain-containing protein NFIA_019760.